The chain runs to 392 residues: Elongation factor Tu 2 (392 aa).

One can recognise a tr-type G domain in the interval 10–201; the sequence is KPHVNIGTIG…AVDSYIPTPE (192 aa). The interval 19–26 is G1; it reads GHVDHGKT. 19 to 26 contributes to the GTP binding site; sequence GHVDHGKT. Residue Thr-26 coordinates Mg(2+). The segment at 55 to 59 is G2; it reads GITIS. Residues 76–79 are G3; that stretch reads DCPG. Residues 76–80 and 131–134 each bind GTP; these read DCPGH and NKVD. A G4 region spans residues 131 to 134; that stretch reads NKVD. The interval 169 to 171 is G5; it reads SAL.

Belongs to the TRAFAC class translation factor GTPase superfamily. Classic translation factor GTPase family. EF-Tu/EF-1A subfamily. In terms of assembly, monomer.

The protein localises to the cytoplasm. The enzyme catalyses GTP + H2O = GDP + phosphate + H(+). Functionally, GTP hydrolase that promotes the GTP-dependent binding of aminoacyl-tRNA to the A-site of ribosomes during protein biosynthesis. The sequence is that of Elongation factor Tu 2 from Rhizobium etli (strain ATCC 51251 / DSM 11541 / JCM 21823 / NBRC 15573 / CFN 42).